A 348-amino-acid chain; its full sequence is Autophagy-related protein 27 (348 aa).

The signal sequence occupies residues 1-20 (MYRPDLLAFLLPLLAAPVFS). Topologically, residues 21–274 (AETLDCGKIR…DDGGDNSSSH (254 aa)) are lumenal. An MRH domain is found at 24 to 255 (LDCGKIRADG…TWHTKYACEK (232 aa)). Cystine bridges form between Cys-26-Cys-69, Cys-82-Cys-89, and Cys-175-Cys-253. N-linked (GlcNAc...) asparagine glycans are attached at residues Asn-61 and Asn-84. Over residues 180–208 (EGTEGEWVSEEKYEKRADEKKDDDKKEDG) the composition is skewed to basic and acidic residues. The segment at 180–219 (EGTEGEWVSEEKYEKRADEKKDDDKKEDGGDKDEGESTLE) is disordered. 2 N-linked (GlcNAc...) asparagine glycosylation sites follow: Asn-226 and Asn-270. The helical transmembrane segment at 275–295 (WGFFTWFVLIAFLLIAGYLIF) threads the bilayer. The Cytoplasmic segment spans residues 296 to 348 (SSWINFTRYGARGWDLLPHSDTIRDIPYLLKDFIRRILNTVQGTGSRGGYSAV).

It belongs to the ATG27 family. In terms of assembly, forms a complex with ATG9 and ATG23.

The protein localises to the cytoplasmic vesicle membrane. The protein resides in the golgi apparatus membrane. It localises to the mitochondrion membrane. It is found in the preautophagosomal structure membrane. Functionally, effector of VPS34 phosphatidylinositol 3-phosphate kinase signaling. Regulates the cytoplasm to vacuole transport (Cvt) vesicle formation. Plays a role in ATG protein retrieval from the pre-autophagosomal structure (PAS) and is especially required for autophagy-dependent cycling of ATG9. Autophagy is required for proper vegetative growth, asexual/sexual reproduction, and full virulence. Autophagy is particularly involved in the biosynthesis of deoxynivalenol (DON), an important virulence determinant. This is Autophagy-related protein 27 from Gibberella zeae (strain ATCC MYA-4620 / CBS 123657 / FGSC 9075 / NRRL 31084 / PH-1) (Wheat head blight fungus).